A 132-amino-acid chain; its full sequence is ATP synthase epsilon chain (132 aa).

This sequence belongs to the ATPase epsilon chain family. As to quaternary structure, F-type ATPases have 2 components, CF(1) - the catalytic core - and CF(0) - the membrane proton channel. CF(1) has five subunits: alpha(3), beta(3), gamma(1), delta(1), epsilon(1). CF(0) has four main subunits: a, b, b' and c.

It is found in the cellular chromatophore membrane. Functionally, produces ATP from ADP in the presence of a proton gradient across the membrane. The polypeptide is ATP synthase epsilon chain (atpC) (Rhodobacter capsulatus (Rhodopseudomonas capsulata)).